The sequence spans 135 residues: Transcription antitermination protein NusB (135 aa).

This sequence belongs to the NusB family.

Functionally, involved in transcription antitermination. Required for transcription of ribosomal RNA (rRNA) genes. Binds specifically to the boxA antiterminator sequence of the ribosomal RNA (rrn) operons. The sequence is that of Transcription antitermination protein NusB from Shewanella piezotolerans (strain WP3 / JCM 13877).